Consider the following 744-residue polypeptide: MSLITRVLQGNLTRKNALQTLTRCGYSSHAKFAEHRPIEKIRNIGISAHIDSGKTTLTERILFYTGRIAEMHEVRGKDNVGATMDSMELERQRGITIQSAATYTMWKDTNVNIIDTPGHVDFTVEVERALRVLDGAVLVLCAVGGVQSQTLTVNRQMKRYNVPCLAFINKLDRLGSNPYRVLSQMRSKMNHNAAFIQLPIGVESNCKGLVDLVREQAIYFEGENGMDVRLDEIPQDMRVESQERRQELIEHLSNADETFGEFFLEEKPFSEADLRAALRRTCINRTFTPVLVGTALKNKGVQPLLDAVIDYLPNPGEVENLGFIEREGKDPEKIVLNPARDGKDPFVGLAFKLEAGRFGQLTYLRCYQGVLRKGDNIFNARTNKKVRIARLVRLHSSQMEDVNEVYAGDIFALFGVDCASGDTFTTNPKNNLAMESIFVPEPVVSMAIKPNNTKDRDNFSKAIARFTKEDPTFHFFFDNDVKETLVSGMGELHLEIYAQRMEREYGCPVTLGKPKVAFRETLVGPCEFDYLHKKQSGGSGQYARIIGVMEPLPPNQNTLLEFVDETVGTNVPKQFVPGVEKGYREMAERGMLSGHRLSGIKFRLQDGGHHIVDSSELAFMLAAHGAIKEVFQNGSWQILEPIMMVEVTAPEEFQGAVMGHLSKRHGIITGTEGTEGWFTVYAEVPLNDMFGYAGELRSSTQGKGEFTMEYSRYSPCLPDVQDQIVRQYQETQGASQPDKKKKKN.

The region spanning 39–316 (EKIRNIGISA…AVIDYLPNPG (278 aa)) is the tr-type G domain. Residues 48 to 55 (AHIDSGKT), 115 to 119 (DTPGH), and 169 to 172 (NKLD) each bind GTP. Over residues 725–735 (VRQYQETQGAS) the composition is skewed to polar residues. The interval 725-744 (VRQYQETQGASQPDKKKKKN) is disordered.

This sequence belongs to the TRAFAC class translation factor GTPase superfamily. Classic translation factor GTPase family. EF-G/EF-2 subfamily.

The protein resides in the mitochondrion. It functions in the pathway protein biosynthesis; polypeptide chain elongation. Functionally, mitochondrial GTPase that catalyzes the GTP-dependent ribosomal translocation step during translation elongation. During this step, the ribosome changes from the pre-translocational (PRE) to the post-translocational (POST) state as the newly formed A-site-bound peptidyl-tRNA and P-site-bound deacylated tRNA move to the P and E sites, respectively. Catalyzes the coordinated movement of the two tRNA molecules, the mRNA and conformational changes in the ribosome. Essential during development as it acts as a retrograde signal from mitochondria to the nucleus to slow down cell proliferation if mitochondrial energy output is low. The protein is Elongation factor G, mitochondrial of Drosophila pseudoobscura pseudoobscura (Fruit fly).